Consider the following 430-residue polypeptide: MISVYSISLGCPKNRVDTEWLLGVLGPEVRPVREMADADLVLINTCGFIAPAVEESVRTVVEAVAELEDLPRRPLLAVAGCLVGRYGRQDLAAELPEVDLWLTNRDMDAWPEMIGRALGVAVHVPPVRLLSTGPSYAYLKVSDGCGHNCSFCTIPSIRGGLVSTPADVLEAEAVNLLSRGVKELIFVAQDVAAYGRDMGLRHGLRSLLDRLLPLDGLERLRLMYLYPAGLDAGLLRYLRDAGKPFVPYFDIPVQHAHPDVLSRMGRPFARNPREVVDRVRDVFPEAALRTSIIVGFPGETQQHYDHLTRFVQDVRFMHLGVFAYRAEEGTPAAGMPGQVDEVEKDWRRDALMEVQAEISEEILEGFTGSDEDVLVDAAHEEWPGLHVGRTWFQAPEIDGVTYISGPGVKPGAMVRAEIVESRTYDLVALS.

The 118-residue stretch at 2-119 folds into the MTTase N-terminal domain; the sequence is ISVYSISLGC…WPEMIGRALG (118 aa). 6 residues coordinate [4Fe-4S] cluster: cysteine 11, cysteine 46, cysteine 81, cysteine 145, cysteine 149, and cysteine 152. The Radical SAM core domain occupies 131-361; that stretch reads STGPSYAYLK…MEVQAEISEE (231 aa). A TRAM domain is found at 364–430; it reads EGFTGSDEDV…SRTYDLVALS (67 aa).

Belongs to the methylthiotransferase family. RimO subfamily. The cofactor is [4Fe-4S] cluster.

The protein resides in the cytoplasm. It catalyses the reaction L-aspartate(89)-[ribosomal protein uS12]-hydrogen + (sulfur carrier)-SH + AH2 + 2 S-adenosyl-L-methionine = 3-methylsulfanyl-L-aspartate(89)-[ribosomal protein uS12]-hydrogen + (sulfur carrier)-H + 5'-deoxyadenosine + L-methionine + A + S-adenosyl-L-homocysteine + 2 H(+). Catalyzes the methylthiolation of an aspartic acid residue of ribosomal protein uS12. This Oleidesulfovibrio alaskensis (strain ATCC BAA-1058 / DSM 17464 / G20) (Desulfovibrio alaskensis) protein is Ribosomal protein uS12 methylthiotransferase RimO.